A 353-amino-acid chain; its full sequence is Putative permease PerM (353 aa).

7 helical membrane passes run 19 to 39 (IALL…SGLL), 72 to 92 (IVLV…LPIA), 156 to 176 (LVGL…VFFL), 217 to 237 (VLEM…FGLN), 240 to 260 (LLLA…AFVV), 281 to 301 (CFAV…PVLF), and 310 to 330 (LVII…GVFF).

This sequence belongs to the autoinducer-2 exporter (AI-2E) (TC 2.A.86) family.

Its subcellular location is the cell membrane. In Escherichia coli O157:H7, this protein is Putative permease PerM (perM).